The primary structure comprises 302 residues: MTNALYQSSINSLPLLGHGKVRDNYAVGNDKLLIVTTDRLSAFDVIMGEPIPDKGRVLNQMANFWFRKLAHIVPNHETGIAPETVVAADEVEQVRGRAVVVKRLKPILVEAVVRGYLAGSGWKDYQATGKVCGIELPPGLQNAQKLPEPIFTPAAKAEMGEHDENISFAEVEARIGIALARQMREISIRLYKEAAEFAATRGIIIADTKFEFGLDDNGVLTLMDEVLTADSSRFWPADSYQVGTNPPSFDKQFVRDWLEAVRIDGKPWPKTAPAPKLPDDVIEKTAAKYREALTRLTGEELK.

The protein belongs to the SAICAR synthetase family.

It catalyses the reaction 5-amino-1-(5-phospho-D-ribosyl)imidazole-4-carboxylate + L-aspartate + ATP = (2S)-2-[5-amino-1-(5-phospho-beta-D-ribosyl)imidazole-4-carboxamido]succinate + ADP + phosphate + 2 H(+). It functions in the pathway purine metabolism; IMP biosynthesis via de novo pathway; 5-amino-1-(5-phospho-D-ribosyl)imidazole-4-carboxamide from 5-amino-1-(5-phospho-D-ribosyl)imidazole-4-carboxylate: step 1/2. The polypeptide is Phosphoribosylaminoimidazole-succinocarboxamide synthase (Cupriavidus taiwanensis (strain DSM 17343 / BCRC 17206 / CCUG 44338 / CIP 107171 / LMG 19424 / R1) (Ralstonia taiwanensis (strain LMG 19424))).